The following is a 175-amino-acid chain: Translation initiation factor IF-3 (175 aa).

This sequence belongs to the IF-3 family. Monomer.

It localises to the cytoplasm. IF-3 binds to the 30S ribosomal subunit and shifts the equilibrium between 70S ribosomes and their 50S and 30S subunits in favor of the free subunits, thus enhancing the availability of 30S subunits on which protein synthesis initiation begins. The polypeptide is Translation initiation factor IF-3 (Staphylococcus aureus (strain MRSA252)).